The following is a 255-amino-acid chain: RNA polymerase sigma-F factor (255 aa).

The Polymerase core binding motif lies at 61-74 (DLFQIGCIGLLKSV). The segment at residues 221–240 (QSEVAERLGISQVQVSRLEK) is a DNA-binding region (H-T-H motif).

It belongs to the sigma-70 factor family. Interacts transiently with the RNAP core.

With respect to regulation, interaction with SpoIIAB inhibits sigma-F activity throughout the cell before the formation of the asymmetric septum; after septation the interaction is confined to the mother cell, and sigma-F activity is released in the prespore. Fin, a second, forespore-specific anti-sigma factor is induced in 2 successive waves by sigma-F and sigma-G, by antagonizing sigma-F it allows the switch to sigma-G factor and progression to the late sporulation development stages. Sigma factors are initiation factors that promote the attachment of RNA polymerase to specific initiation sites and are then released. This sigma factor is responsible for the expression of sporulation specific genes. Interaction with SpoIIAB inhibits sigma-F activity throughout the cell before the formation of the asymmetric septum; after septation the interaction is confined to the mother cell, and sigma F activity is released in the prespore. Responsible for expression of csfB (the anti-sigma-G factor Gin). Associates with the RNAP core only in stationary phase cells. The protein is RNA polymerase sigma-F factor (sigF) of Bacillus subtilis (strain 168).